Here is a 248-residue protein sequence, read N- to C-terminus: 2,3-bisphosphoglycerate-dependent phosphoglycerate mutase (248 aa).

Residues 8–15 (RHGESLWN), 21–22 (TG), Arg-60, 87–90 (EKHY), Lys-98, 114–115 (RR), and 183–184 (GN) contribute to the substrate site. Residue His-9 is the Tele-phosphohistidine intermediate of the active site. Glu-87 acts as the Proton donor/acceptor in catalysis.

This sequence belongs to the phosphoglycerate mutase family. BPG-dependent PGAM subfamily.

It carries out the reaction (2R)-2-phosphoglycerate = (2R)-3-phosphoglycerate. It participates in carbohydrate degradation; glycolysis; pyruvate from D-glyceraldehyde 3-phosphate: step 3/5. Its function is as follows. Catalyzes the interconversion of 2-phosphoglycerate and 3-phosphoglycerate. The polypeptide is 2,3-bisphosphoglycerate-dependent phosphoglycerate mutase (Porphyromonas gingivalis (strain ATCC 33277 / DSM 20709 / CIP 103683 / JCM 12257 / NCTC 11834 / 2561)).